The chain runs to 454 residues: MEDYLQDCRAALQDSRPLHVVLGNEACDLDSMVSALALAFYLTKTSEAEDIFIPVLNIKRSELPLRGDNVFFLQEVKIPEPALIFRDEIDLLALHQAGQLTLILVDHHILPKSDAALEEAVAEVLDHRPIEQKYCPPCHVSVELVGSCATLVTERILQGAPETLDRQTAALLHGTIILDCVNMDTNIGKATPKDSKYVEELEALFPDLPKRKDIFDSLQKAKFDVSGLTTEQMLRKDQKTVYRQGTKVAISAIYMDLKAFLQRTDLFTDLSSFCHDHSYDALVAMTIFFNTQNEPVRQLAIFCPHEALRMTICGILERSTSPPLKLTPIPSTSPNLQAYHQGNTQVSRKKLLPVLQEALSAYLDSAKMASGQSEVAVGMSREQVDKDLDKASNSLISGLSQDEEDPPLPPTPMNSLVDECPLDQGLPKFSAEAVFEKCSQISLSQSARACTSNK.

An N-acetylmethionine modification is found at Met1. Residues Asp28, Asp30, Asp106, and Asp179 each coordinate Mn(2+). The DHH motif signature appears at Asp106–His108. Positions Ser394–Pro421 are essential for homodimerization. The disordered stretch occupies residues Ser397–Cys420. At Ser400 the chain carries Phosphoserine. Thr411 is modified (phosphothreonine). Ser415 is modified (phosphoserine).

Belongs to the PPase class C family. Prune subfamily. In terms of assembly, homooligomer. Able to homodimerize via its C-terminal domain. Interacts with NME1. Interacts with GSK3; at focal adhesion complexes where paxillin and vinculin are colocalized. Interacts with alpha and beta tubulin. Mn(2+) serves as cofactor.

Its subcellular location is the cytoplasm. The protein localises to the nucleus. It localises to the cell junction. It is found in the focal adhesion. The catalysed reaction is diphosphate + H2O = 2 phosphate + H(+). Its activity is regulated as follows. Activated by magnesium ions and inhibited by manganese ions. Inhibited by dipyridamole, moderately sensitive to IBMX and inhibited by vinpocetine. Its function is as follows. Phosphodiesterase (PDE) that has higher activity toward cAMP than cGMP, as substrate. Plays a role in cell proliferation, migration and differentiation, and acts as a negative regulator of NME1. Plays a role in the regulation of neurogenesis. Involved in the regulation of microtubule polymerization. The polypeptide is Exopolyphosphatase PRUNE1 (Prune1) (Mus musculus (Mouse)).